The sequence spans 2193 residues: Highly reducing polyketide synthase VdtX (2193 aa).

Residues 1–417 (MAICGIAVRL…GVNAHVIIES (417 aa)) enclose the Ketosynthase family 3 (KS3) domain. Residues Cys170, His306, and His340 each act as for beta-ketoacyl synthase activity in the active site. The tract at residues 513–809 (VFAGQGAQWP…HPYVPCLIRF (297 aa)) is malonyl-CoA:ACP transacylase (MAT) domain. The segment at 877 to 1001 (HELLGTRVVD…GEVAQENLSR (125 aa)) is N-terminal hotdog fold. Positions 877 to 1128 (HELLGTRVVD…DIVLRPLGAN (252 aa)) are dehydratase (DH) domain. Positions 877-1202 (HELLGTRVVD…LQRQPKPSSE (326 aa)) constitute a PKS/mFAS DH domain. The active-site Proton acceptor; for dehydratase activity is the His909. The tract at residues 1032–1202 (SVTSNTVSGR…LQRQPKPSSE (171 aa)) is C-terminal hotdog fold. Residue Asp1093 is the Proton donor; for dehydratase activity of the active site. Residues 1256-1390 (NYLNEPQQRI…DRWDSILKAA (135 aa)) form a methyltransferase (CMet) domain region. The tract at residues 1575–1783 (GQQVQLLGDD…SGQHIGQLRL (209 aa)) is enoyl reductase (ER) domain. The tract at residues 1807–1981 (ASYLLVGGLG…ASVIDIGEVQ (175 aa)) is ketoreductase (KR) domain. The region spanning 2102–2183 (PSATQFVSLE…AMGEHVIREL (82 aa)) is the Carrier domain. Ser2143 is subject to O-(pantetheine 4'-phosphoryl)serine.

Its function is as follows. Highly reducing polyketide synthase; part of the gene cluster that mediates the biosynthesis of viriditoxin, one of the 'classical' secondary metabolites produced by fungi and that has antibacterial activity. The first step is performed by the polyketide synthase VdtA which condenses one acetyl-CoA and 6 malonyl-CoA units to form the heptaketide monomer backbone of viriditoxin. The product of VdtA is then O-methylated on C7 by the O-methyltransferase VdtC. The O-methyl group is important for the stereoselective coupling of the monomers at the final step of viriditoxin biosynthesis. The short-chain dehydrogenase/reductase VdtF is involved in the reduction of the C3-C4 double bond. The FAD-binding monooxygenase VdtE then converts the ketone group into a methyl-ester group to yield semi-viriditoxin. Finally, the laccase VdtB is involved in dimerization of 2 semi-viriditoxin molecules to yield the final viriditoxin. The non-catalytic carboxylesterase-like protein VdtD affects the stereochemistical outcome of the coupling. The highly reducing polyketide synthase VdtX is not involved in viriditoxin synthesis, but might possibly play a role in the production of additional metabolites not identified yet. In Byssochlamys spectabilis (Paecilomyces variotii), this protein is Highly reducing polyketide synthase VdtX.